Consider the following 21-residue polypeptide: Fibrinogen beta chain (21 aa).

Gln-1 carries the pyrrolidone carboxylic acid modification. Tyr-6 bears the Sulfotyrosine mark.

As to quaternary structure, heterohexamer; disulfide linked. Contains 2 sets of 3 non-identical chains (alpha, beta and gamma). The 2 heterotrimers are in head to head conformation with the N-termini in a small central domain. Post-translationally, conversion of fibrinogen to fibrin is triggered by thrombin, which cleaves fibrinopeptides A and B from alpha and beta chains, and thus exposes the N-terminal polymerization sites responsible for the formation of the soft clot.

The protein localises to the secreted. Functionally, cleaved by the protease thrombin to yield monomers which, together with fibrinogen alpha (FGA) and fibrinogen gamma (FGG), polymerize to form an insoluble fibrin matrix. Fibrin has a major function in hemostasis as one of the primary components of blood clots. In addition, functions during the early stages of wound repair to stabilize the lesion and guide cell migration during re-epithelialization. Was originally thought to be essential for platelet aggregation, based on in vitro studies using anticoagulated blood. However subsequent studies have shown that it is not absolutely required for thrombus formation in vivo. Enhances expression of SELP in activated platelets. Maternal fibrinogen is essential for successful pregnancy. Fibrin deposition is also associated with infection, where it protects against IFNG-mediated hemorrhage. May also facilitate the antibacterial immune response via both innate and T-cell mediated pathways. This chain is Fibrinogen beta chain (FGB), found in Odocoileus hemionus (Mule deer).